The following is a 310-amino-acid chain: Homeobox protein dsc-1 (310 aa).

Residues 180-239 constitute a DNA-binding region (homeobox); that stretch reads RRRFRTNFTELQSTFLEDSFKESHYPDHKAKKYMADFLKIPEDRITVWFQNRRAKWRRKE. A disordered region spans residues 262-310; sequence CFSAQHPDDGPNAKHPNSFGIPNQPMSLDQFPMNTEQDFPEFPSLQEHQ. The segment covering 281–298 has biased composition (polar residues); sequence GIPNQPMSLDQFPMNTEQ.

Expressed in the bilateral sensory neurons AWA, AWB, AWC, ASE, FLP and PVD. Also expressed in the enteric intestinal and anal depressor muscles.

It localises to the nucleus. The protein localises to the cell projection. Its subcellular location is the axon. The protein resides in the cytoplasm. Transcriptional regulator which plays a role in the expulsion step of defecation by controlling enteric muscle-specific expression of exp-1 which is required for enteric muscle contraction. Not required for exp-1 expression in the PDA neuron. Also involved in controlling the length of the defecation cycle. The chain is Homeobox protein dsc-1 from Caenorhabditis elegans.